The following is a 343-amino-acid chain: Tetraacyldisaccharide 4'-kinase (343 aa).

ATP is bound at residue S47–T54.

Belongs to the LpxK family.

The enzyme catalyses a lipid A disaccharide + ATP = a lipid IVA + ADP + H(+). The protein operates within glycolipid biosynthesis; lipid IV(A) biosynthesis; lipid IV(A) from (3R)-3-hydroxytetradecanoyl-[acyl-carrier-protein] and UDP-N-acetyl-alpha-D-glucosamine: step 6/6. Transfers the gamma-phosphate of ATP to the 4'-position of a tetraacyldisaccharide 1-phosphate intermediate (termed DS-1-P) to form tetraacyldisaccharide 1,4'-bis-phosphate (lipid IVA). The polypeptide is Tetraacyldisaccharide 4'-kinase (Flavobacterium psychrophilum (strain ATCC 49511 / DSM 21280 / CIP 103535 / JIP02/86)).